Here is a 294-residue protein sequence, read N- to C-terminus: uncharacterized protein (294 aa).

The 139-residue stretch at 13 to 151 (QCSQIRPYLY…LIDLEQKLRG (139 aa)) folds into the Tyrosine-protein phosphatase domain. C95 serves as the catalytic Phosphocysteine intermediate. The tract at residues 234–294 (PTLLVPSSSS…WRLSFHKDVV (61 aa)) is disordered.

It belongs to the protein-tyrosine phosphatase family. Non-receptor class dual specificity subfamily.

This is an uncharacterized protein from Caenorhabditis elegans.